Reading from the N-terminus, the 370-residue chain is Tryptophan--tRNA ligase (370 aa).

The short motif at 75-83 (PSGKMHFGH) is the 'HIGH' region element. A 'KMSKS' region motif is present at residues 255–259 (KMSSS).

Belongs to the class-I aminoacyl-tRNA synthetase family.

Its subcellular location is the cytoplasm. It carries out the reaction tRNA(Trp) + L-tryptophan + ATP = L-tryptophyl-tRNA(Trp) + AMP + diphosphate + H(+). This is Tryptophan--tRNA ligase from Methanocaldococcus jannaschii (strain ATCC 43067 / DSM 2661 / JAL-1 / JCM 10045 / NBRC 100440) (Methanococcus jannaschii).